Reading from the N-terminus, the 273-residue chain is tRNA (guanine-N(7)-)-methyltransferase (273 aa).

The segment at 1-32 is disordered; that stretch reads MSATAKKSAAQLQREEEEARKKLKRLSKQGGV. S-adenosyl-L-methionine contacts are provided by residues Gly-88, 111–112, 150–151, and Cys-170; these read EI and NC. The active site involves Asp-173. An S-adenosyl-L-methionine-binding site is contributed by 248–250; it reads TEE.

Belongs to the class I-like SAM-binding methyltransferase superfamily. TrmB family. Forms a complex with trm82.

Its subcellular location is the nucleus. The catalysed reaction is guanosine(46) in tRNA + S-adenosyl-L-methionine = N(7)-methylguanosine(46) in tRNA + S-adenosyl-L-homocysteine. It functions in the pathway tRNA modification; N(7)-methylguanine-tRNA biosynthesis. In terms of biological role, catalyzes the formation of N(7)-methylguanine at position 46 (m7G46) in tRNA. The polypeptide is tRNA (guanine-N(7)-)-methyltransferase (trm8) (Schizosaccharomyces pombe (strain 972 / ATCC 24843) (Fission yeast)).